We begin with the raw amino-acid sequence, 165 residues long: Phosphopantetheine adenylyltransferase (165 aa).

Thr-9 contacts substrate. ATP is bound by residues 9–10 (TF) and His-17. Residues Lys-41, Leu-73, and Arg-87 each contribute to the substrate site. ATP-binding positions include 88 to 90 (GLR), Glu-98, and 123 to 129 (YQFISGT).

It belongs to the bacterial CoaD family. As to quaternary structure, homohexamer. Requires Mg(2+) as cofactor.

Its subcellular location is the cytoplasm. The enzyme catalyses (R)-4'-phosphopantetheine + ATP + H(+) = 3'-dephospho-CoA + diphosphate. The protein operates within cofactor biosynthesis; coenzyme A biosynthesis; CoA from (R)-pantothenate: step 4/5. Its function is as follows. Reversibly transfers an adenylyl group from ATP to 4'-phosphopantetheine, yielding dephospho-CoA (dPCoA) and pyrophosphate. In Burkholderia orbicola (strain MC0-3), this protein is Phosphopantetheine adenylyltransferase.